We begin with the raw amino-acid sequence, 1796 residues long: U3 small nucleolar RNA-associated protein 10 (1796 aa).

HEAT repeat units follow at residues 586–623 (LDLQ…SNAE), 656–692 (LLQE…SATG), 861–898 (DLTT…SDHS), 983–1021 (DTSV…TAPD), 1052–1089 (QTIK…AYEH), 1161–1198 (QPKP…VLSS), 1258–1295 (LSIG…QESN), 1302–1340 (TVLL…KYGK), 1344–1383 (EAVA…VLQD), 1492–1529 (SAVE…SALD), 1711–1748 (DHRK…TLGE), and 1752–1789 (EMLS…ILGE). The disordered stretch occupies residues 881–901 (TTDSPATKRRRTSSSDHSRGV).

It belongs to the HEATR1/UTP10 family. In terms of assembly, component of the ribosomal small subunit (SSU) processome.

The protein resides in the nucleus. Its subcellular location is the nucleolus. Its function is as follows. Involved in nucleolar processing of pre-18S ribosomal RNA. Involved in ribosome biosynthesis. This Pyricularia oryzae (strain 70-15 / ATCC MYA-4617 / FGSC 8958) (Rice blast fungus) protein is U3 small nucleolar RNA-associated protein 10.